A 641-amino-acid chain; its full sequence is Epithelial sodium channel subunit beta (641 aa).

Over 1-50 (MHVKKYLLKGLHRLQKGPGYTYKELLVWYCDNTNTHGPKRIICEGPKKKA) the chain is Cytoplasmic. Residues 51 to 71 (MWFVLTLLFTSLVCWQWGLFI) form a helical membrane-spanning segment. Residues 72 to 533 (KTYLNWEVSV…GGQFGFWMGG (462 aa)) lie on the Extracellular side of the membrane. 9 cysteine pairs are disulfide-bonded: Cys-98/Cys-273, Cys-185/Cys-190, Cys-197/Cys-204, Cys-250/Cys-257, Cys-362/Cys-449, Cys-387/Cys-445, Cys-391/Cys-441, Cys-400/Cys-427, and Cys-402/Cys-416. N-linked (GlcNAc...) asparagine glycosylation occurs at Asn-141. Asn-379 carries an N-linked (GlcNAc...) asparagine glycan. Residues 534–554 (SVLCLIEFGEIIIDFVWITII) traverse the membrane as a helical segment. The Cytoplasmic portion of the chain corresponds to 555-641 (KLVALAKSVR…IESDSEGDAI (87 aa)). A disordered region spans residues 597–624 (TPGPDVEAYPHEQNPPIPGTPPPNYDSL). Over residues 609–620 (QNPPIPGTPPPN) the composition is skewed to pro residues. A PY motif; recruits WW domain-containing proteins and is thereby required for ubiquitination and inhibition of the channel by NEDD4 and NEDD4L motif is present at residues 617–621 (PPPNY). Phosphoserine is present on residues Ser-634 and Ser-636.

Belongs to the amiloride-sensitive sodium channel (TC 1.A.6) family. SCNN1B subfamily. Component of the heterotrimeric epithelial sodium channel (ENaC) composed of an alpha/SCNN1A, a beta/SCNN1B and a gamma/SCNN1G subunit. An additional delta/SCNN1D subunit can replace the alpha/SCNN1A subunit to form an alternative channel with specific properties. Interacts with WWP1 (via WW domains). Interacts with WWP2 (via WW domains); inhibits the channel. Interacts with the full-length immature form of PCSK9 (pro-PCSK9). Interacts (N-glycosylated) with BPIFA1; the interaction is direct and inhibits the proteolytic processing of SCNN1A and SCNN1G and the activation of ENaC. Ubiquitinated. Can be ubiquitinated at multiple sites and undergo monoubiquitination and polyubiquitination. Ubiquitination by NEDD4 or NEDD4L inhibits the ENaC channel through endocytosis, intracellular retention and degradation of its individual subunits. However, some studies could not confirm the ubiquitination of this subunit of the ENaC. Post-translationally, phosphorylated on serine and threonine residues. Aldosterone and insulin increase the basal level of phosphorylation. In terms of processing, N-glycosylated. N-glycosylation is required for interaction with BPIFA1.

The protein localises to the apical cell membrane. It is found in the cytoplasmic vesicle membrane. It catalyses the reaction Na(+)(in) = Na(+)(out). Its activity is regulated as follows. Originally identified and characterized by its inhibition by the diuretic drug amiloride. In terms of biological role, this is one of the three pore-forming subunits of the heterotrimeric epithelial sodium channel (ENaC), a critical regulator of sodium balance and fluid homeostasis. ENaC operates in epithelial tissues, where it mediates the electrodiffusion of sodium ions from extracellular fluid through the apical membrane of cells, with water following osmotically. It plays a key role in maintaining sodium homeostasis through electrogenic sodium reabsorption in the kidneys. Additionally, ENaC is essential for airway surface liquid homeostasis, which is crucial for proper mucus clearance. In Bos taurus (Bovine), this protein is Epithelial sodium channel subunit beta.